Consider the following 240-residue polypeptide: Ribonuclease PH (240 aa).

Residues R87 and 125–127 (GTR) contribute to the phosphate site.

This sequence belongs to the RNase PH family. In terms of assembly, homohexameric ring arranged as a trimer of dimers.

It carries out the reaction tRNA(n+1) + phosphate = tRNA(n) + a ribonucleoside 5'-diphosphate. Functionally, phosphorolytic 3'-5' exoribonuclease that plays an important role in tRNA 3'-end maturation. Removes nucleotide residues following the 3'-CCA terminus of tRNAs; can also add nucleotides to the ends of RNA molecules by using nucleoside diphosphates as substrates, but this may not be physiologically important. Probably plays a role in initiation of 16S rRNA degradation (leading to ribosome degradation) during starvation. The polypeptide is Ribonuclease PH (Pseudomonas fluorescens (strain Pf0-1)).